A 141-amino-acid polypeptide reads, in one-letter code: Hemoglobin subunit alpha (141 aa).

In terms of domain architecture, Globin spans 1-141 (VLSEEDKSHV…VSAMLTSKYR (141 aa)). His-58 contributes to the O2 binding site. Residue His-87 coordinates heme b.

This sequence belongs to the globin family. Heterotetramer of two alpha chains and two beta chains. Red blood cells.

In terms of biological role, involved in oxygen transport from the lung to the various peripheral tissues. In Caiman crocodilus (Spectacled caiman), this protein is Hemoglobin subunit alpha (HBA).